The following is a 236-amino-acid chain: Small ribosomal subunit protein uS3 (236 aa).

The KH type-2 domain maps to 39–107 (IREFLTEELK…DTSLNIVEVR (69 aa)). A disordered region spans residues 214–236 (ASERRAVEGDNQGSSSNRRRENA).

This sequence belongs to the universal ribosomal protein uS3 family. Part of the 30S ribosomal subunit. Forms a tight complex with proteins S10 and S14.

Functionally, binds the lower part of the 30S subunit head. Binds mRNA in the 70S ribosome, positioning it for translation. The chain is Small ribosomal subunit protein uS3 from Brucella anthropi (strain ATCC 49188 / DSM 6882 / CCUG 24695 / JCM 21032 / LMG 3331 / NBRC 15819 / NCTC 12168 / Alc 37) (Ochrobactrum anthropi).